The chain runs to 685 residues: Phenoloxidase subunit 1 (685 aa).

The propeptide occupies 1–51; sequence MSDAKNNLLLFFDRPSEPCFMQKGEENAVFEIPDNYYPEKYQRVSNAIGNR. Residue asparagine 184 is glycosylated (N-linked (GlcNAc...) asparagine). Cu cation is bound by residues histidine 209, histidine 213, and histidine 239. 2 N-linked (GlcNAc...) asparagine glycosylation sites follow: asparagine 254 and asparagine 324. Glutamate 351 acts as the Proton acceptor in catalysis. Cu cation contacts are provided by histidine 366, histidine 370, and histidine 406. Residues asparagine 491 and asparagine 540 are each glycosylated (N-linked (GlcNAc...) asparagine). 2 cysteine pairs are disulfide-bonded: cysteine 581/cysteine 623 and cysteine 583/cysteine 630.

As to quaternary structure, heterodimer. Cu(2+) is required as a cofactor. In terms of processing, the N-terminus is blocked. Synthesized by hemocytes and released into the hemolymph plasma.

The protein localises to the secreted. It catalyses the reaction 2 L-dopa + O2 = 2 L-dopaquinone + 2 H2O. It carries out the reaction L-tyrosine + O2 = L-dopaquinone + H2O. Its function is as follows. This is a copper-containing oxidase that functions in the formation of pigments such as melanins and other polyphenolic compounds. Catalyzes the rate-limiting conversions of tyrosine to DOPA, DOPA to DOPA-quinone and possibly 5,6 dihydroxyindole to indole-5'6 quinone. This Bombyx mori (Silk moth) protein is Phenoloxidase subunit 1.